The chain runs to 20 residues: Brevinin-1DYc (20 aa).

Cys-14 and Cys-20 are disulfide-bonded.

As to expression, expressed by the skin glands.

It localises to the secreted. Its function is as follows. Antimicrobial peptide. Has low activity against the Gram-positive bacterium S.aureus and the Gram-negative bacterium E.coli (MIC&lt;15 uM). Has a strong hemolytic activity. The polypeptide is Brevinin-1DYc (Rana dybowskii (Dybovsky's frog)).